Consider the following 576-residue polypeptide: TRAF-type zinc finger domain-containing protein 1 (576 aa).

Alanine 2 bears the N-acetylalanine mark. The TRAF-type zinc finger occupies 27 to 103 (IHEIHCQRNI…DLELSVVKLK (77 aa)). 8 positions are modified to phosphoserine: serine 278, serine 320, serine 326, serine 327, serine 409, serine 415, serine 430, and serine 450. A disordered region spans residues 402–432 (EGIPTQDSQPEDRSPELSRRRVKHQGDLSSG). The span at 411–420 (PEDRSPELSR) shows a compositional bias: basic and acidic residues. 2 disordered regions span residues 465–491 (LNSSGPRSDCQRSPPGVLKLNNSGSQD) and 529–576 (HGSP…EEEE). Residue serine 531 is modified to Phosphoserine. The span at 540 to 552 (GSRSSRVTPTAAS) shows a compositional bias: polar residues.

Interacts with MAVS, TICAM1, TRAF1, TRAF2, TRAF3 and TRAF6. Expressed in vascular smooth muscle cells.

In terms of biological role, negative feedback regulator that controls excessive innate immune responses. Regulates both Toll-like receptor 4 (TLR4) and DDX58/RIG1-like helicases (RLH) pathways. May inhibit the LTR pathway by direct interaction with TRAF6 and attenuation of NF-kappa-B activation. May negatively regulate the RLH pathway downstream from MAVS and upstream of NF-kappa-B and IRF3. In Rattus norvegicus (Rat), this protein is TRAF-type zinc finger domain-containing protein 1 (Trafd1).